The primary structure comprises 403 residues: Esterase LipC (403 aa).

Catalysis depends on residues Ser237, Asp334, and His367.

The protein belongs to the 'GDXG' lipolytic enzyme family.

The protein localises to the cell surface. It localises to the secreted. The protein resides in the cell wall. It is found in the capsule. The enzyme catalyses a fatty acid ester + H2O = an aliphatic alcohol + a fatty acid + H(+). It catalyses the reaction a butanoate ester + H2O = an aliphatic alcohol + butanoate + H(+). It carries out the reaction a hexanoate ester + H2O = an aliphatic alcohol + hexanoate + H(+). The catalysed reaction is an acetyl ester + H2O = an aliphatic alcohol + acetate + H(+). The enzyme catalyses an octanoate ester + H2O = an aliphatic alcohol + octanoate + H(+). It catalyses the reaction decanoate ester + H2O = decanoate + an aliphatic alcohol + H(+). Its function is as follows. Esterase that can hydrolyze short-chain esters with the carbon chain containing 2 to 10 carbon atoms. Does not have lipase activity. Is highly immunogenic and elicits strong humoral immune responses in both HIV-negative (HIV-) and HIV-positive (HIV+) tuberculosis (TB) patients. Also elicits pro-inflammatory cytokine and chemokine responses from macrophages and pulmonary epithelial cells. May participate in the progression of active tuberculosis both by contributing to the utilization of lipid substrates for bacterial growth and replication, and by modulating immune responses. This Mycobacterium tuberculosis (strain ATCC 25618 / H37Rv) protein is Esterase LipC.